The following is a 172-amino-acid chain: Protein GrpE (172 aa).

Residues 1–24 (MNQDHPEFDSEDLAQNPPETDPLK) are disordered.

The protein belongs to the GrpE family. Homodimer.

It is found in the cytoplasm. In terms of biological role, participates actively in the response to hyperosmotic and heat shock by preventing the aggregation of stress-denatured proteins, in association with DnaK and GrpE. It is the nucleotide exchange factor for DnaK and may function as a thermosensor. Unfolded proteins bind initially to DnaJ; upon interaction with the DnaJ-bound protein, DnaK hydrolyzes its bound ATP, resulting in the formation of a stable complex. GrpE releases ADP from DnaK; ATP binding to DnaK triggers the release of the substrate protein, thus completing the reaction cycle. Several rounds of ATP-dependent interactions between DnaJ, DnaK and GrpE are required for fully efficient folding. The chain is Protein GrpE from Xanthomonas oryzae pv. oryzae (strain PXO99A).